Reading from the N-terminus, the 157-residue chain is S-ribosylhomocysteine lyase (157 aa).

Fe cation contacts are provided by His53, His57, and Cys124.

It belongs to the LuxS family. As to quaternary structure, homodimer. The cofactor is Fe cation.

The catalysed reaction is S-(5-deoxy-D-ribos-5-yl)-L-homocysteine = (S)-4,5-dihydroxypentane-2,3-dione + L-homocysteine. In terms of biological role, involved in the synthesis of autoinducer 2 (AI-2) which is secreted by bacteria and is used to communicate both the cell density and the metabolic potential of the environment. The regulation of gene expression in response to changes in cell density is called quorum sensing. Catalyzes the transformation of S-ribosylhomocysteine (RHC) to homocysteine (HC) and 4,5-dihydroxy-2,3-pentadione (DPD). The protein is S-ribosylhomocysteine lyase of Borrelia garinii subsp. bavariensis (strain ATCC BAA-2496 / DSM 23469 / PBi) (Borreliella bavariensis).